The primary structure comprises 191 residues: Signal peptidase complex catalytic subunit sec11 (191 aa).

Residues 1 to 18 (MLSFLSSNLSNVRQSLAQ) are Cytoplasmic-facing. A helical; Signal-anchor for type II membrane protein transmembrane segment spans residues 19–39 (VLNFALVLSTAFMMWKGLSVF). At 40-191 (TASSSPVVVV…MGLMVMLQRE (152 aa)) the chain is on the lumenal side. Active-site charge relay system residues include serine 53, histidine 92, and aspartate 133. Residues 177-188 (ALLGIMGLMVML) form a C-terminal short (CTS) helix region.

The protein belongs to the peptidase S26B family. As to quaternary structure, component of the signal peptidase complex (SPC) composed of a catalytic subunit SEC11 and three accessory subunits SPC1, SPC2 and SPC3. The complex induces a local thinning of the ER membrane which is used to measure the length of the signal peptide (SP) h-region of protein substrates. This ensures the selectivity of the complex towards h-regions shorter than 18-20 amino acids. SPC associates with the translocon complex.

Its subcellular location is the endoplasmic reticulum membrane. The catalysed reaction is Cleavage of hydrophobic, N-terminal signal or leader sequences from secreted and periplasmic proteins.. Its function is as follows. Catalytic component of the signal peptidase complex (SPC) which catalyzes the cleavage of N-terminal signal sequences from nascent proteins as they are translocated into the lumen of the endoplasmic reticulum. Specifically cleaves N-terminal signal peptides that contain a hydrophobic alpha-helix (h-region) shorter than 18-20 amino acids. The protein is Signal peptidase complex catalytic subunit sec11 (sec11) of Aspergillus oryzae (strain ATCC 42149 / RIB 40) (Yellow koji mold).